Reading from the N-terminus, the 141-residue chain is Nucleoside diphosphate kinase (141 aa).

The ATP site is built by Lys-11, Phe-59, Arg-87, Thr-93, Arg-104, and Asn-114. Catalysis depends on His-117, which acts as the Pros-phosphohistidine intermediate.

The protein belongs to the NDK family. In terms of assembly, homotetramer. Mg(2+) serves as cofactor.

Its subcellular location is the cytoplasm. The catalysed reaction is a 2'-deoxyribonucleoside 5'-diphosphate + ATP = a 2'-deoxyribonucleoside 5'-triphosphate + ADP. The enzyme catalyses a ribonucleoside 5'-diphosphate + ATP = a ribonucleoside 5'-triphosphate + ADP. Functionally, major role in the synthesis of nucleoside triphosphates other than ATP. The ATP gamma phosphate is transferred to the NDP beta phosphate via a ping-pong mechanism, using a phosphorylated active-site intermediate. This Polynucleobacter asymbioticus (strain DSM 18221 / CIP 109841 / QLW-P1DMWA-1) (Polynucleobacter necessarius subsp. asymbioticus) protein is Nucleoside diphosphate kinase.